Consider the following 557-residue polypeptide: MNIAEQVKDALKEEIIAAVVKAGLADESQVPDVLLEVPKDKTHGDYSTNMAMQLARIAKKAPRQIAEDIVKAFDKGKASIEKMDIAGPGFINFYMNNQYLTKLIPAVLEAKEAYGETNTGGGQKVQVEFVSANPTGDLHLGHARGAAVGDSLCNILDKAGFDVSREYYINDAGNQINNLALSVEVRYFEALGLEKEMPEDGYRGEDIKGIGQKLADEFGDRFVHESEEERMKFFREYGLKYELEKLRVDLENFRVPFDVWYSETSLYENGKIEPALETLREKGYVFEEDGATWLRSTDFGDDKDRVLIKKDGSFTYLLPDIAYHKDKLDRGFDQLINIWGADHHGYIPRMKAAIQALGYPAGKLEVEIIQLVHLYKNGEKMKMSKRTGKAVTMRDLIEEVGLDATRYFFAMRSAATHMDFDLDLAISTSNENPVYYAQYAHARICSMLRQGEEKGYEPNLEKADFSHIQSEKEYDLLKIIGGFPEVVAEAAEKRIPHRVTNYIYDLASALHSFYNAEKVIDVENETKTTARLSLMKATQITLANALKLIGVSAPEKM.

The short motif at 132-142 (ANPTGDLHLGH) is the 'HIGH' region element.

This sequence belongs to the class-I aminoacyl-tRNA synthetase family. In terms of assembly, monomer.

It is found in the cytoplasm. It carries out the reaction tRNA(Arg) + L-arginine + ATP = L-arginyl-tRNA(Arg) + AMP + diphosphate. This is Arginine--tRNA ligase from Bacillus pumilus (strain SAFR-032).